We begin with the raw amino-acid sequence, 373 residues long: Glutamate 5-kinase (373 aa).

Lysine 15 provides a ligand contact to ATP. Substrate is bound by residues serine 55, aspartate 142, and asparagine 154. Residues 174–175 (TD) and 216–222 (TGGMVTK) contribute to the ATP site. Residues 281 to 359 (SGKIIVDDGA…GEIEAILGYK (79 aa)) form the PUA domain.

It belongs to the glutamate 5-kinase family.

The protein localises to the cytoplasm. It catalyses the reaction L-glutamate + ATP = L-glutamyl 5-phosphate + ADP. It participates in amino-acid biosynthesis; L-proline biosynthesis; L-glutamate 5-semialdehyde from L-glutamate: step 1/2. Functionally, catalyzes the transfer of a phosphate group to glutamate to form L-glutamate 5-phosphate. This chain is Glutamate 5-kinase, found in Geobacter sulfurreducens (strain ATCC 51573 / DSM 12127 / PCA).